The chain runs to 28 residues: Conotoxin Cl9b (28 aa).

2 positions are modified to 4-hydroxyproline: Pro-17 and Pro-28.

In terms of processing, contains 3 disulfide bonds. In terms of tissue distribution, expressed by the venom duct.

It localises to the secreted. This Californiconus californicus (California cone) protein is Conotoxin Cl9b.